Consider the following 232-residue polypeptide: 7-cyano-7-deazaguanine synthase (232 aa).

ATP is bound at residue 13–23 (LSGGLDSATVL). Residues Cys-194, Cys-204, Cys-207, and Cys-210 each contribute to the Zn(2+) site.

This sequence belongs to the QueC family. It depends on Zn(2+) as a cofactor.

The catalysed reaction is 7-carboxy-7-deazaguanine + NH4(+) + ATP = 7-cyano-7-deazaguanine + ADP + phosphate + H2O + H(+). Its pathway is purine metabolism; 7-cyano-7-deazaguanine biosynthesis. Its function is as follows. Catalyzes the ATP-dependent conversion of 7-carboxy-7-deazaguanine (CDG) to 7-cyano-7-deazaguanine (preQ(0)). The protein is 7-cyano-7-deazaguanine synthase of Hydrogenovibrio crunogenus (strain DSM 25203 / XCL-2) (Thiomicrospira crunogena).